The primary structure comprises 365 residues: Popy Class I histocompatibility antigen, A-1 alpha chain (365 aa).

An N-terminal signal peptide occupies residues 1 to 24; sequence MAIMAPRTLLLLLSGALALTQTWA. The tract at residues 25 to 114 is alpha-1; it reads GSHSMRYFST…LRGYYNQSDG (90 aa). The Extracellular portion of the chain corresponds to 25–308; it reads GSHSMRYFST…ELSSQPTIPI (284 aa). The N-linked (GlcNAc...) asparagine glycan is linked to asparagine 110. An alpha-2 region spans residues 115 to 206; the sequence is GSHTIQRMFG…ENGKETLQRT (92 aa). Cystine bridges form between cysteine 125–cysteine 188 and cysteine 227–cysteine 283. Positions 207 to 298 are alpha-3; sequence DAPKTHMTHH…GLPEPLTLRW (92 aa). One can recognise an Ig-like C1-type domain in the interval 209–297; it reads PKTHMTHHPV…EGLPEPLTLR (89 aa). The interval 299–308 is connecting peptide; it reads ELSSQPTIPI. Residues 309–332 form a helical membrane-spanning segment; sequence VGIIAGLVLLGAVITGAVVAAVMW. At 333–365 the chain is on the cytoplasmic side; the sequence is RRRNSDRKGGSYSQAASNDSAQGSDVSLTACKV. The segment at 340–365 is disordered; it reads KGGSYSQAASNDSAQGSDVSLTACKV. At serine 343 the chain carries Phosphoserine. Residues 343–359 are compositionally biased toward polar residues; the sequence is SYSQAASNDSAQGSDVS. Tyrosine 344 carries the phosphotyrosine modification. 5 positions are modified to phosphoserine: serine 345, serine 349, serine 352, serine 356, and serine 359.

Belongs to the MHC class I family. As to quaternary structure, heterodimer of an alpha chain and a beta chain (beta-2-microglobulin).

The protein resides in the membrane. Its function is as follows. Involved in the presentation of foreign antigens to the immune system. This Pongo pygmaeus (Bornean orangutan) protein is Popy Class I histocompatibility antigen, A-1 alpha chain.